An 874-amino-acid polypeptide reads, in one-letter code: Alanine--tRNA ligase (874 aa).

4 residues coordinate Zn(2+): histidine 564, histidine 568, cysteine 665, and histidine 669.

This sequence belongs to the class-II aminoacyl-tRNA synthetase family. The cofactor is Zn(2+).

The protein resides in the cytoplasm. It catalyses the reaction tRNA(Ala) + L-alanine + ATP = L-alanyl-tRNA(Ala) + AMP + diphosphate. Catalyzes the attachment of alanine to tRNA(Ala) in a two-step reaction: alanine is first activated by ATP to form Ala-AMP and then transferred to the acceptor end of tRNA(Ala). Also edits incorrectly charged Ser-tRNA(Ala) and Gly-tRNA(Ala) via its editing domain. The protein is Alanine--tRNA ligase of Burkholderia vietnamiensis (strain G4 / LMG 22486) (Burkholderia cepacia (strain R1808)).